Reading from the N-terminus, the 746-residue chain is Alpha-1,4-glucan:maltose-1-phosphate maltosyltransferase (746 aa).

Residues 1 to 43 (MAAVQHRATTRTSNTDNSTTKTKSKATSARKSPATKRKRVSAE) are disordered. Positions 10 to 32 (TRTSNTDNSTTKTKSKATSARKS) are enriched in low complexity. Positions 343, 403, and 438 each coordinate alpha-maltose 1-phosphate. Asp-473 (nucleophile) is an active-site residue. Asn-474 lines the alpha-maltose 1-phosphate pocket. Residue Glu-502 is the Proton donor of the active site. Residue 612–613 (KY) coordinates alpha-maltose 1-phosphate.

The protein belongs to the glycosyl hydrolase 13 family. GlgE subfamily. Homodimer.

The enzyme catalyses alpha-maltose 1-phosphate + [(1-&gt;4)-alpha-D-glucosyl](n) = [(1-&gt;4)-alpha-D-glucosyl](n+2) + phosphate. In terms of biological role, maltosyltransferase that uses maltose 1-phosphate (M1P) as the sugar donor to elongate linear or branched alpha-(1-&gt;4)-glucans. Is involved in a branched alpha-glucan biosynthetic pathway from trehalose, together with TreS, Mak and GlgB. The protein is Alpha-1,4-glucan:maltose-1-phosphate maltosyltransferase of Bifidobacterium longum (strain NCC 2705).